We begin with the raw amino-acid sequence, 170 residues long: Photosystem I assembly protein Ycf3 (170 aa).

TPR repeat units lie at residues 35 to 68, 72 to 105, and 120 to 153; these read AFTYYRDGMLAQSEGNYAEALQNYYEATRLEIDP, SYILYNIGLIHTSNGEHTKALEYYFRALERNPFL, and GEQAILQGDSEIAEAWFDQAAEYWKQAIALTPGN.

This sequence belongs to the Ycf3 family.

It localises to the plastid. The protein localises to the chloroplast thylakoid membrane. In terms of biological role, essential for the assembly of the photosystem I (PSI) complex. May act as a chaperone-like factor to guide the assembly of the PSI subunits. The chain is Photosystem I assembly protein Ycf3 from Saccharum officinarum (Sugarcane).